We begin with the raw amino-acid sequence, 815 residues long: Serotype-specific mannosyltransferase WbdA (815 aa).

Residues 1-374 form an alpha-(1-&gt;2)-mannosyltransferase region; that stretch reads MSRAIIENAG…WANTAHLAID (374 aa). Residues 431 to 804 are alpha-(1-&gt;3)-mannosyltransferase; sequence KLLVDISVLA…WKQSAELLLK (374 aa).

The protein belongs to the glycosyltransferase group 1 family. Glycosyltransferase 4 subfamily.

The protein localises to the cell inner membrane. It participates in bacterial outer membrane biogenesis; LPS O-antigen biosynthesis. In terms of biological role, mannosyltransferase involved in the biosynthesis of the repeat unit of the lipopolysaccharide (LPS) O-antigen region. The sequence is that of Serotype-specific mannosyltransferase WbdA from Escherichia coli.